Reading from the N-terminus, the 160-residue chain is Cyanate hydratase (160 aa).

Residues Arg-100, Glu-103, and Ser-126 contribute to the active site.

Belongs to the cyanase family.

The catalysed reaction is cyanate + hydrogencarbonate + 3 H(+) = NH4(+) + 2 CO2. Functionally, catalyzes the reaction of cyanate with bicarbonate to produce ammonia and carbon dioxide. This Aspergillus flavus (strain ATCC 200026 / FGSC A1120 / IAM 13836 / NRRL 3357 / JCM 12722 / SRRC 167) protein is Cyanate hydratase.